The primary structure comprises 634 residues: Nucleoside triphosphatase I (634 aa).

Residues 41–203 (FLGLDSMNSL…ALLVNLLRPG (163 aa)) enclose the Helicase ATP-binding domain. 54 to 61 (QETGVGKT) provides a ligand contact to ATP. A DEXH box motif is present at residues 140 to 143 (DECH). The Helicase C-terminal domain maps to 355-531 (SLYQALYEHS…EFSQLYRVLK (177 aa)). Residues 456-523 (DIFILDMTWN…EIIQNKAREF (68 aa)) are binding to the cap-specific mRNA (nucleoside-2'-O-)-methyltransferase.

The protein belongs to the helicase family. NPH I subfamily. Monomer. Interacts (via C-terminus) with RAP94 (via N-terminus). Interacts with the cap-specific mRNA (nucleoside-2'-O-)-methyltransferase.

The protein resides in the virion. It catalyses the reaction a ribonucleoside 5'-triphosphate + H2O = a ribonucleoside 5'-diphosphate + phosphate + H(+). Functionally, DNA-dependent ATPase required for providing the needed energy to achieve the termination of early transcripts. Acts in concert with the RAP94 subunit of the virion RNA polymerase and the capping enzyme/VTF to catalyze release of UUUUUNU-containing nascent RNA from the elongation complex. NPH-I must bind ssDNA in order to exhibit ATPase activity. This chain is Nucleoside triphosphatase I (NPH1), found in Homo sapiens (Human).